We begin with the raw amino-acid sequence, 186 residues long: Adenine phosphoribosyltransferase (186 aa).

The protein belongs to the purine/pyrimidine phosphoribosyltransferase family. In terms of assembly, homodimer.

It is found in the cytoplasm. It catalyses the reaction AMP + diphosphate = 5-phospho-alpha-D-ribose 1-diphosphate + adenine. It participates in purine metabolism; AMP biosynthesis via salvage pathway; AMP from adenine: step 1/1. In terms of biological role, catalyzes a salvage reaction resulting in the formation of AMP, that is energically less costly than de novo synthesis. This is Adenine phosphoribosyltransferase from Xanthomonas campestris pv. campestris (strain 8004).